Here is a 1357-residue protein sequence, read N- to C-terminus: DNA-directed RNA polymerase subunit beta (1357 aa).

It belongs to the RNA polymerase beta chain family. As to quaternary structure, the RNAP catalytic core consists of 2 alpha, 1 beta, 1 beta' and 1 omega subunit. When a sigma factor is associated with the core the holoenzyme is formed, which can initiate transcription.

It catalyses the reaction RNA(n) + a ribonucleoside 5'-triphosphate = RNA(n+1) + diphosphate. In terms of biological role, DNA-dependent RNA polymerase catalyzes the transcription of DNA into RNA using the four ribonucleoside triphosphates as substrates. The chain is DNA-directed RNA polymerase subunit beta from Pseudomonas putida (strain GB-1).